Consider the following 262-residue polypeptide: Flap endonuclease Xni (262 aa).

Asp105 lines the Mg(2+) pocket. Positions 162-257 (ERSQFLDLMA…FRVIDSPPEK (96 aa)) constitute a 5'-3' exonuclease domain. Leu172, Ala173, Pro181, Ile183, and Ile186 together coordinate K(+). Positions 185–190 (GIGPKS) are interaction with DNA.

This sequence belongs to the Xni family. Mg(2+) serves as cofactor. K(+) is required as a cofactor.

Functionally, has flap endonuclease activity. During DNA replication, flap endonucleases cleave the 5'-overhanging flap structure that is generated by displacement synthesis when DNA polymerase encounters the 5'-end of a downstream Okazaki fragment. The chain is Flap endonuclease Xni from Shewanella baltica (strain OS155 / ATCC BAA-1091).